A 210-amino-acid polypeptide reads, in one-letter code: Chaperone protein TorD (210 aa).

The protein belongs to the TorD/DmsD family. TorD subfamily.

It localises to the cytoplasm. Involved in the biogenesis of TorA. Acts on TorA before the insertion of the molybdenum cofactor and, as a result, probably favors a conformation of the apoenzyme that is competent for acquiring the cofactor. The sequence is that of Chaperone protein TorD from Salmonella choleraesuis (strain SC-B67).